The sequence spans 64 residues: Phi-buthitoxin-Hj1a (64 aa).

An N-terminal signal peptide occupies residues 1–18; the sequence is MNSFVVVLLLFIAILCNA. 3 disulfide bridges follow: Cys-29–Cys-43, Cys-36–Cys-49, and Cys-42–Cys-58.

This sequence belongs to the scorpion calcin-like family. In terms of tissue distribution, expressed by the venom gland.

It is found in the secreted. Functionally, may increase intracellular calcium release through the activation of nuclear inositol 1,4,5-trisphosphate receptors (ITPR) of cardiomyocytes, thereby causing an increase in the contraction frequency of these cells. In Hottentotta judaicus (Black scorpion), this protein is Phi-buthitoxin-Hj1a.